The primary structure comprises 84 residues: uncharacterized protein (84 aa).

One can recognise an LITAF domain in the interval 1-83; that stretch reads MDDKFTTLPC…CKQAVFVYKI (83 aa). Zn(2+) is bound by residues Cys21 and Cys24. Positions 39–61 are membrane-binding amphipathic helix; sequence MSWVVCTAITLACLPCCCIPFLC. Positions 71 and 74 each coordinate Zn(2+).

Its subcellular location is the host membrane. This is an uncharacterized protein from Dryophytes versicolor (chameleon treefrog).